The sequence spans 180 residues: Translation initiation factor IF-3 (180 aa).

It belongs to the IF-3 family. Monomer.

The protein resides in the cytoplasm. Functionally, IF-3 binds to the 30S ribosomal subunit and shifts the equilibrium between 70S ribosomes and their 50S and 30S subunits in favor of the free subunits, thus enhancing the availability of 30S subunits on which protein synthesis initiation begins. This chain is Translation initiation factor IF-3, found in Xylella fastidiosa (strain 9a5c).